The sequence spans 173 residues: Alpha-crystallin A chain (173 aa).

Residue Met1 is modified to N-acetylmethionine. A sHSP domain is found at 53-164 (NFLDSSNSGM…GDRSIPVTRD (112 aa)). Zn(2+)-binding residues include His101, Glu103, and His108. Cys132 and Cys143 are joined by a disulfide. The segment at 143–173 (CGPKSGGSESGRGDRSIPVTRDDKTNSTPSS) is disordered. Basic and acidic residues predominate over residues 153–167 (GRGDRSIPVTRDDKT).

This sequence belongs to the small heat shock protein (HSP20) family. Heteropolymer composed of three CRYAA and one CRYAB subunits. Inter-subunit bridging via zinc ions enhances stability, which is crucial as there is no protein turn over in the lens. Zinc coordination is achieved at least by His-101, Glu-103 and His-108. His-101 and Glu-103 come from the same molecule within the oligomer, while His-108 residue is provided by another molecule. Can also form homodimers and homotetramers (dimers of dimers) which serve as the building blocks of homooligomers. Part of a complex required for lens intermediate filament formation composed of BFSP1, BFSP2 and CRYAA.

It localises to the cytoplasm. It is found in the nucleus. Contributes to the transparency and refractive index of the lens. May act as a chaperone, preventing aggregation of various proteins under a wide range of stress conditions. In Psalidodon fasciatus (Banded astyanax), this protein is Alpha-crystallin A chain (cryaa).